A 424-amino-acid chain; its full sequence is Double homeobox protein 4 (424 aa).

The segment covering 1–10 (MALPTPSDST) has biased composition (polar residues). Disordered stretches follow at residues 1-24 (MALP…RRRL), 72-102 (SRQL…TAVT), 218-362 (LQPS…LQEP), and 388-414 (QPLL…PLSE). DNA-binding regions (homeobox) lie at residues 19–78 (GRRR…LRQH) and 94–153 (GRRK…PGQG). The segment covering 265 to 274 (KSREDRDPQR) has biased composition (basic and acidic residues). Low complexity-rich tracts occupy residues 278 to 302 (PGPC…LAPP) and 319 to 329 (AGAAWEPQAGA). A required for interaction with EP300 and CREBBP, and for transcriptional activation of target genes region spans residues 327-424 (AGAAPPPQPA…EEYRALLEEL (98 aa)). An important for transcriptional activation of target genes region spans residues 405 to 424 (AASLEAPLSEEEYRALLEEL).

It belongs to the paired homeobox family. Binds DNA as a monomer. Interacts (via C-terminus) with EP300 and CREBBP. Isoform 1: Does not seem to be expressed in normal muscle, but is detected in muscle of individuals with FSHD, and also in testis (at protein level). Isoform 1: Does not seem to be expressed in normal muscle, but in muscle of individuals with FSHD, where it may be toxic to cells. Isoform 2: Detected in skeletal muscle, fibroblasts and testis from healthy individuals.

It localises to the nucleus. The protein resides in the cytoplasm. Functionally, transcription factor that is selectively and transiently expressed in cleavage-stage embryos. Binds to double-stranded DNA elements with the consensus sequence 5'-TAATCTAATCA-3'. Binds to chromatin containing histone H3 acetylated at 'Lys-27' (H3K27ac) and promotes deacetylation of H3K27ac. In parallel, binds to chromatin that lacks histone H3 acetylation at 'Lys-27' (H3K27ac) and recruits EP300 and CREBBP to promote acetylation of histone H3 at 'Lys-27' at new sites. Involved in transcriptional regulation of numerous genes, primarily as transcriptional activator, but also mediates repression of a set of target genes. Promotes expression of ZSCAN4 and KDM4E, two proteins with essential roles during early embryogenesis. Promotes nuclear translocation of CTNNB1/beta-catenin and its subsequent activation of target genes. Heterologous expression in cultured embryonic stem cells mediates transcription of HERVL retrotransposons and transcripts derived from ACRO1 and HSATII satellite repeats. May activate expression of PITX1. May regulate microRNA (miRNA) expression. Inappropriate expression can inhibit myogenesis and promote apoptosis. Its function is as follows. Probably inactive as a transcriptional activator, due to the absence of the C-terminal region that is important for transcriptional activation. Can inhibit transcriptional activation mediated by isoform 1. Heterologous expression of isoform 2 has no deleterious effect on cell survival. The polypeptide is Double homeobox protein 4 (Homo sapiens (Human)).